The primary structure comprises 213 residues: NADH dehydrogenase [ubiquinone] iron-sulfur protein 7, mitochondrial (213 aa).

A mitochondrion-targeting transit peptide spans 1–31 (MALIARNAKLLTGTAPFLQRAATIHTTLPSL). Over residues 30–42 (SLSQQPASSPATS) the composition is skewed to low complexity. The tract at residues 30–52 (SLSQQPASSPATSGGAQPPSMNT) is disordered. 4 residues coordinate [4Fe-4S] cluster: cysteine 88, cysteine 89, cysteine 153, and cysteine 183.

The protein belongs to the complex I 20 kDa subunit family. As to quaternary structure, complex I is composed of about 45 different subunits. This is a component of the iron-sulfur (IP) fragment of the enzyme. The cofactor is [4Fe-4S] cluster.

It localises to the mitochondrion. It carries out the reaction a ubiquinone + NADH + 5 H(+)(in) = a ubiquinol + NAD(+) + 4 H(+)(out). Its function is as follows. Core subunit of the mitochondrial membrane respiratory chain NADH dehydrogenase (Complex I) that is believed to belong to the minimal assembly required for catalysis. Complex I functions in the transfer of electrons from NADH to the respiratory chain. The immediate electron acceptor for the enzyme is believed to be ubiquinone. This chain is NADH dehydrogenase [ubiquinone] iron-sulfur protein 7, mitochondrial, found in Solanum tuberosum (Potato).